We begin with the raw amino-acid sequence, 331 residues long: Isopenicillin N synthase (331 aa).

Residues Arg87, Tyr91, Ser183, and Tyr189 each contribute to the isopenicillin N site. Residues Arg87, Tyr91, Ser183, Tyr189, His214, and Asp216 each contribute to the N-[(5S)-5-amino-5-carboxypentanoyl]-L-cysteinyl-D-valine site. Positions 176-288 constitute a Fe2OG dioxygenase domain; the sequence is KPDDTLASVV…RQSLPFFVNL (113 aa). His214, Asp216, and His270 together coordinate Fe(2+). Arg279 lines the 2-oxoglutarate pocket. Position 281 (Ser281) interacts with isopenicillin N. Ser281 lines the N-[(5S)-5-amino-5-carboxypentanoyl]-L-cysteinyl-D-valine pocket.

Belongs to the iron/ascorbate-dependent oxidoreductase family. Monomer. It depends on Fe(2+) as a cofactor.

Its subcellular location is the cytoplasm. It is found in the cytosol. It catalyses the reaction N-[(5S)-5-amino-5-carboxypentanoyl]-L-cysteinyl-D-valine + O2 = isopenicillin N + 2 H2O. The protein operates within antibiotic biosynthesis; penicillin G biosynthesis; penicillin G from L-alpha-aminoadipate and L-cysteine and L-valine: step 2/3. In terms of biological role, isopenicillin N synthase; part of the gene cluster that mediates the biosynthesis of penicillin, the world's most important antibiotic. IpnA catalyzes the cyclization of the tripeptide N-[(5S)-5-amino-5-carboxypentanoyl]-L-cysteinyl-D-valine (LLD-ACV or ACV) to form isopenicillin N (IPN) that contains the beta-lactam nucleus. The penicillin biosynthesis occurs via 3 enzymatic steps, the first corresponding to the production of the tripeptide N-[(5S)-5-amino-5-carboxypentanoyl]-L-cysteinyl-D-valine (LLD-ACV or ACV) by the NRPS acvA. The tripeptide ACV is then cyclized to isopenicillin N (IPN) by the isopenicillin N synthase ipnA that forms the beta-lactam nucleus. Finally, the alpha-aminoadipyl side chain is exchanged for phenylacetic acid by the isopenicillin N acyltransferase penDE to yield penicillin in the peroxisomal matrix. The sequence is that of Isopenicillin N synthase from Emericella nidulans (strain FGSC A4 / ATCC 38163 / CBS 112.46 / NRRL 194 / M139) (Aspergillus nidulans).